Consider the following 270-residue polypeptide: Diaminopimelate epimerase (270 aa).

Substrate-binding residues include Asn15, Gln49, and Asn66. The Proton donor role is filled by Cys75. Substrate is bound by residues 76 to 77 (GN), Asn155, Asn187, and 204 to 205 (ER). Cys213 functions as the Proton acceptor in the catalytic mechanism. 214-215 (GS) is a substrate binding site.

Belongs to the diaminopimelate epimerase family. As to quaternary structure, homodimer.

The protein localises to the cytoplasm. The catalysed reaction is (2S,6S)-2,6-diaminopimelate = meso-2,6-diaminopimelate. It functions in the pathway amino-acid biosynthesis; L-lysine biosynthesis via DAP pathway; DL-2,6-diaminopimelate from LL-2,6-diaminopimelate: step 1/1. Functionally, catalyzes the stereoinversion of LL-2,6-diaminopimelate (L,L-DAP) to meso-diaminopimelate (meso-DAP), a precursor of L-lysine and an essential component of the bacterial peptidoglycan. This chain is Diaminopimelate epimerase, found in Rickettsia africae (strain ESF-5).